We begin with the raw amino-acid sequence, 252 residues long: tRNA (guanine-N(1)-)-methyltransferase (252 aa).

S-adenosyl-L-methionine contacts are provided by residues G116 and 135–140 (LGDYVL).

Belongs to the RNA methyltransferase TrmD family. As to quaternary structure, homodimer.

Its subcellular location is the cytoplasm. The catalysed reaction is guanosine(37) in tRNA + S-adenosyl-L-methionine = N(1)-methylguanosine(37) in tRNA + S-adenosyl-L-homocysteine + H(+). In terms of biological role, specifically methylates guanosine-37 in various tRNAs. The protein is tRNA (guanine-N(1)-)-methyltransferase of Limosilactobacillus fermentum (strain NBRC 3956 / LMG 18251) (Lactobacillus fermentum).